The primary structure comprises 70 residues: Large ribosomal subunit protein bL31 (70 aa).

Residues cysteine 16, cysteine 18, cysteine 37, and cysteine 40 each coordinate Zn(2+).

This sequence belongs to the bacterial ribosomal protein bL31 family. Type A subfamily. As to quaternary structure, part of the 50S ribosomal subunit. Zn(2+) is required as a cofactor.

Functionally, binds the 23S rRNA. The chain is Large ribosomal subunit protein bL31 from Actinobacillus pleuropneumoniae serotype 5b (strain L20).